The primary structure comprises 199 residues: 7-methyl-GTP pyrophosphatase (199 aa).

Catalysis depends on Asp-76, which acts as the Proton acceptor.

It belongs to the Maf family. YceF subfamily. The cofactor is a divalent metal cation.

The protein localises to the cytoplasm. The enzyme catalyses N(7)-methyl-GTP + H2O = N(7)-methyl-GMP + diphosphate + H(+). Its function is as follows. Nucleoside triphosphate pyrophosphatase that hydrolyzes 7-methyl-GTP (m(7)GTP). May have a dual role in cell division arrest and in preventing the incorporation of modified nucleotides into cellular nucleic acids. The chain is 7-methyl-GTP pyrophosphatase (maf-2) from Brucella suis biovar 1 (strain 1330).